The following is a 570-amino-acid chain: Urease subunit alpha (570 aa).

The 440-residue stretch at 131–570 (GGMDSHIHFI…LPMAQRYFLF (440 aa)) folds into the Urease domain. Ni(2+)-binding residues include H136, H138, and K219. At K219 the chain carries N6-carboxylysine. H221 lines the substrate pocket. Residues H248 and H274 each coordinate Ni(2+). The Proton donor role is filled by H322. A Ni(2+)-binding site is contributed by D362.

The protein belongs to the metallo-dependent hydrolases superfamily. Urease alpha subunit family. In terms of assembly, heterotrimer of UreA (gamma), UreB (beta) and UreC (alpha) subunits. Three heterotrimers associate to form the active enzyme. It depends on Ni cation as a cofactor. Carboxylation allows a single lysine to coordinate two nickel ions.

The protein resides in the cytoplasm. The catalysed reaction is urea + 2 H2O + H(+) = hydrogencarbonate + 2 NH4(+). It functions in the pathway nitrogen metabolism; urea degradation; CO(2) and NH(3) from urea (urease route): step 1/1. This is Urease subunit alpha from Rhizobium meliloti (strain 1021) (Ensifer meliloti).